A 213-amino-acid chain; its full sequence is Adenylate kinase (213 aa).

Residue 10 to 15 (GAGKGT) participates in ATP binding. The tract at residues 30 to 59 (STGDMFRAAMANQTEMGVLAKSYIDKGDLV) is NMP. AMP contacts are provided by residues Thr-31, Arg-36, 57–59 (DLV), 86–89 (GYPR), and Gln-93. Residues 127–160 (GRIINKKTGETFHKIFNPPVGDYKEEDFYQREDD) are LID. ATP-binding positions include Arg-128 and 137 to 138 (TF). AMP is bound by residues Arg-157 and Arg-168. Lys-196 serves as a coordination point for ATP.

Belongs to the adenylate kinase family. As to quaternary structure, monomer.

It localises to the cytoplasm. The catalysed reaction is AMP + ATP = 2 ADP. Its pathway is purine metabolism; AMP biosynthesis via salvage pathway; AMP from ADP: step 1/1. Functionally, catalyzes the reversible transfer of the terminal phosphate group between ATP and AMP. Plays an important role in cellular energy homeostasis and in adenine nucleotide metabolism. This chain is Adenylate kinase, found in Streptococcus equi subsp. equi (strain 4047).